The sequence spans 538 residues: Syncytin-1 (538 aa).

An N-terminal signal peptide occupies residues 1–20 (MALPYHILLFTVLLPSFTLT). Residues 21–443 (APPPCRCMTS…NTGPWGLLSQ (423 aa)) lie on the Extracellular side of the membrane. The N-linked (GlcNAc...) asparagine glycan is linked to asparagine 169. The CXXC signature appears at 186 to 189 (CWIC). 3 disulfide bridges follow: cysteine 186–cysteine 189, cysteine 186–cysteine 405, and cysteine 397–cysteine 404. Asparagine 208, asparagine 214, asparagine 234, and asparagine 281 each carry an N-linked (GlcNAc...) asparagine glycan. The interval 320–340 (ILPFVIGAGVLGALGTGIGGI) is fusion peptide. The segment at 380-396 (LQNRRALDLLTAERGGT) is immunosuppression. Positions 397–405 (CLFLGEECC) match the CX6CC motif. A glycan (N-linked (GlcNAc...) asparagine) is linked at asparagine 409. A helical transmembrane segment spans residues 444-464 (WMPWILPFLGPLAAIILLLLF). The essential for the fusiogenic function stretch occupies residues 465-484 (GPCIFNLLVNFVSSRIEAVK). Topologically, residues 465–538 (GPCIFNLLVN…LLRPNSAGSS (74 aa)) are cytoplasmic. The disordered stretch occupies residues 496–538 (KIYRRPLDRPASPRSDVNDIKCTPPEEISTAQPLLRPNSAGSS).

It belongs to the gamma type-C retroviral envelope protein family. HERV class-I W env subfamily. As to quaternary structure, the mature envelope protein (Env) consists of a trimer of SU-TM heterodimers attached probably by a labile interchain disulfide bond. Interacts with the C-type lectin CD209/DC-SIGN. Specific enzymatic cleavages in vivo yield mature proteins. Envelope glycoproteins are synthesized as an inactive precursor that is heavily N-glycosylated and processed likely by furin in the Golgi to yield the mature SU and TM proteins. The cleavage site between SU and TM requires the minimal sequence [KR]-X-[KR]-R. In terms of processing, the CXXC motif is highly conserved across a broad range of retroviral envelope proteins. It is thought to participate in the formation of a labile disulfide bond possibly with the CX6CC motif present in the transmembrane protein.

It is found in the cell membrane. It localises to the virion. This endogenous retroviral envelope protein has retained its original fusogenic properties and participates in trophoblast fusion and the formation of a syncytium during placenta morphogenesis. May recognize and induce fusion through binding of SLC1A4 and SLC1A5. In terms of biological role, endogenous envelope proteins may have kept, lost or modified their original function during evolution. Retroviral envelope proteins mediate receptor recognition and membrane fusion during early infection. The surface protein (SU) mediates receptor recognition, while the transmembrane protein (TM) acts as a class I viral fusion protein. The protein may have at least 3 conformational states: pre-fusion native state, pre-hairpin intermediate state, and post-fusion hairpin state. During viral and target cell membrane fusion, the coiled coil regions (heptad repeats) assume a trimer-of-hairpins structure, positioning the fusion peptide in close proximity to the C-terminal region of the ectodomain. The formation of this structure appears to drive apposition and subsequent fusion of membranes. This Gorilla gorilla gorilla (Western lowland gorilla) protein is Syncytin-1 (ERVW-1).